Reading from the N-terminus, the 347-residue chain is Ryncolin-3 (347 aa).

An N-terminal signal peptide occupies residues 1–19; that stretch reads MKPWAAFHLIFLVASSVEG. Residues 57–114 form the Collagen-like domain; it reads GIPGVPGINGSEGLKGDPGPQGLPGETGFDGIPGVAGPKGDKGDQGDKGDKGDKGDKG. Positions 62-115 are disordered; sequence PGINGSEGLKGDPGPQGLPGETGFDGIPGVAGPKGDKGDQGDKGDKGDKGDKGD. Residues 95–115 are compositionally biased toward basic and acidic residues; that stretch reads KGDKGDQGDKGDKGDKGDKGD. Residues 121–341 enclose the Fibrinogen C-terminal domain; the sequence is DCPPTDVEVR…YADMKIRPQQ (221 aa). 2 cysteine pairs are disulfide-bonded: Cys-132–Cys-160 and Cys-284–Cys-297.

The protein belongs to the ficolin lectin family. Veficolin subfamily. In terms of processing, hydroxylated. Expressed by the venom duct.

It is found in the secreted. Its function is as follows. Initiates complement activation and/or interferes in platelet aggregation and/or blood coagulation. This Cerberus rynchops (Dog-faced water snake) protein is Ryncolin-3.